Reading from the N-terminus, the 605-residue chain is Endonuclease 8-like 3 (605 aa).

The active-site Schiff-base intermediate with DNA; via amino nitrogen is Val-2. DNA-binding residues include Asn-192 and Arg-271. Residues 247-281 (KVYKRPNCGQCHCRITVCRFGDNNRMTYFCPHCQK) form an FPG-type zinc finger. The RanBP2-type zinc finger occupies 317-346 (SEEHWTCVVCTLINKPSSKACDACLTSRPI). A Phosphoserine modification is found at Ser-450. The segment at 456–477 (ESKLFSPAHKKPKTAQYSSPEL) is disordered. Residues Cys-507, His-510, Cys-533, Cys-541, Cys-554, His-556, Cys-579, and Cys-587 each coordinate Zn(2+). 2 consecutive GRF-type zinc fingers follow at residues 507–550 (CSKH…ADLS) and 554–596 (CNHG…AENG).

Belongs to the FPG family. Expressed in keratinocytes and embryonic fibroblasts (at protein level). Also detected in thymus, testis and fetal lung primary fibroblasts.

It localises to the nucleus. Its subcellular location is the chromosome. It catalyses the reaction 2'-deoxyribonucleotide-(2'-deoxyribose 5'-phosphate)-2'-deoxyribonucleotide-DNA = a 3'-end 2'-deoxyribonucleotide-(2,3-dehydro-2,3-deoxyribose 5'-phosphate)-DNA + a 5'-end 5'-phospho-2'-deoxyribonucleoside-DNA + H(+). Its function is as follows. DNA glycosylase which prefers single-stranded DNA (ssDNA), or partially ssDNA structures such as bubble and fork structures, to double-stranded DNA (dsDNA). Mediates interstrand cross-link repair in response to replication stress: acts by mediating DNA glycosylase activity, cleaving one of the two N-glycosyl bonds comprising the interstrand cross-link, which avoids the formation of a double-strand break but generates an abasic site that is bypassed by translesion synthesis polymerases. In vitro, displays strong glycosylase activity towards the hydantoin lesions spiroiminodihydantoin (Sp) and guanidinohydantoin (Gh) in both ssDNA and dsDNA; also recognizes FapyA, FapyG, 5-OHU, 5-OHC, 5-OHMH, Tg and 8-oxoA lesions in ssDNA. No activity on 8-oxoG detected. Also shows weak DNA-(apurinic or apyrimidinic site) lyase activity. In vivo, appears to be the primary enzyme involved in removing Sp and Gh from ssDNA in neonatal tissues. The sequence is that of Endonuclease 8-like 3 (NEIL3) from Homo sapiens (Human).